Reading from the N-terminus, the 511-residue chain is Sporulation-specific chitinase 2 (511 aa).

A signal peptide spans 1–34; it reads MVGHSAQHRSKSSLVSHLLILLIFITIIIEMCLY. Residues 73-472 enclose the GH18 domain; the sequence is FISGVYYSNW…NAFNEGLHFN (400 aa). An N-linked (GlcNAc...) asparagine glycan is attached at Asn147. The active-site Proton donor is the Glu223. Asn228, Asn456, and Asn472 each carry an N-linked (GlcNAc...) asparagine glycan.

Belongs to the glycosyl hydrolase 18 family. Chitinase class III subfamily.

Its subcellular location is the secreted. The enzyme catalyses Random endo-hydrolysis of N-acetyl-beta-D-glucosaminide (1-&gt;4)-beta-linkages in chitin and chitodextrins.. The polypeptide is Sporulation-specific chitinase 2 (CTS2) (Saccharomyces cerevisiae (strain ATCC 204508 / S288c) (Baker's yeast)).